The sequence spans 644 residues: Uromodulin (644 aa).

A signal peptide spans 1 to 26 (MGQLLSLTWLLLVMVVTPWFTVAGAN). The EGF-like 1 domain occupies 30–66 (EARRCSECHDNATCVLDGVVTTCSCQAGFTGDGLVCE). Cystine bridges form between Cys-34-Cys-43, Cys-37-Cys-52, Cys-54-Cys-65, Cys-71-Cys-84, Cys-79-Cys-93, Cys-95-Cys-107, Cys-113-Cys-127, Cys-121-Cys-136, Cys-138-Cys-149, Cys-151-Cys-162, Cys-156-Cys-173, Cys-177-Cys-270, Cys-198-Cys-285, Cys-220-Cys-258, Cys-226-Cys-290, Cys-251-Cys-259, Cys-300-Cys-309, Cys-303-Cys-318, Cys-320-Cys-350, Cys-338-Cys-428, and Cys-369-Cys-392. Asn-40 carries an N-linked (GlcNAc...) asparagine glycan. The EGF-like 2; calcium-binding domain occupies 67–108 (DIDECATPWTHNCSNSICMNTLGSYECSCQDGFRLTPGLGCI). A glycan (N-linked (GlcNAc...) asparagine) is linked at Asn-78. Residues 109-150 (DVNECTEQGLSNCHSLATCVNTEGSYSCVCPKGYRGDGWYCE) form the EGF-like 3; calcium-binding domain. A beta hairpin region spans residues 151-174 (CSPGFCEPGLDCLPQGPSGKLVCQ). The interval 175-294 (DPCNVYETLT…CNLAYCTDPS (120 aa)) is D10C. N-linked (GlcNAc...) asparagine glycosylation is present at Asn-235. Residue Asn-278 is glycosylated (N-linked (GlcNAc...) asparagine). Residues 295-326 (SVEGTCEECGVDEDCVSDNGRWRCQCKQDFNV) enclose the EGF-like 4 domain. A glycan (N-linked (GlcNAc...) asparagine) is linked at Asn-325. The segment at 337–432 (ECEANEIKIS…RINFECSYPL (96 aa)) is ZP-N. The region spanning 337–592 (ECEANEIKIS…PTCSGTRYRS (256 aa)) is the ZP domain. 2 N-linked (GlcNAc...) asparagine glycosylation sites follow: Asn-399 and Asn-450. Residues 433-456 (DMKVSLKTSLQPMVSALNISLGGT) form a flexible ZP-N/ZP-C linker; important for secretion and polymerization into filaments region. Residues 457 to 467 (GKFTVQMALFQ) form an internal hydrophobic patch (IHP) region. Positions 457-592 (GKFTVQMALF…PTCSGTRYRS (136 aa)) are ZP-C. 3 disulfides stabilise this stretch: Cys-509-Cys-569, Cys-530-Cys-585, and Cys-574-Cys-581. Asn-516 is a glycosylation site (N-linked (GlcNAc...) asparagine). The interval 589-592 (RYRS) is essential for cleavage by HPN. Residues 601–609 (VLNLGPITR) form an external hydrophobic patch (EHP); regulates polymerization into filaments region. The GPI-anchor amidated serine moiety is linked to residue Ser-615. The propeptide at 616-644 (VSKAASSNLGFLSIWLLLFLSATLTLMVH) is removed in mature form.

In terms of assembly, homodimer that then polymerizes into long filaments. The filaments can additionally assemble laterally to form a sheet. The filaments consist of a zigzag-shaped backbone with laterally protruding arms which interact with bacterial adhesin fimH. Two fimH molecules can bind to a single UMOD monomer. N-glycosylated. In terms of processing, proteolytically cleaved at a conserved C-terminal proteolytic cleavage site to generate the secreted form found in urine. This cleavage is catalyzed by HPN. In terms of tissue distribution, expression restricted to the thick ascending limb of the loop of Henle (TALH).

The protein localises to the apical cell membrane. It localises to the basolateral cell membrane. Its subcellular location is the cell projection. It is found in the cilium membrane. The protein resides in the secreted. Functionally, functions in biogenesis and organization of the apical membrane of epithelial cells of the thick ascending limb of Henle's loop (TALH), where it promotes formation of complex filamentous gel-like structure that may play a role in the water barrier permeability. May serve as a receptor for binding and endocytosis of cytokines (IL-1, IL-2) and TNF. Facilitates neutrophil migration across renal epithelia. Its function is as follows. In the urine, may contribute to colloid osmotic pressure, retards passage of positively charged electrolytes, and inhibits formation of liquid containing supersaturated salts and subsequent formation of salt crystals. Protects against urinary tract infections by binding to type 1 fimbriated E.coli. Binds to bacterial adhesin fimH which mediates the stable formation of bacterial aggregates, prevents the binding of E.coli to uroplakins UPK1A and UPK1B which act as urothelial receptors for type I fimbriae, and allows for pathogen clearance through micturation. Also promotes aggregation of other bacteria including K.pneumoniae, P.aeruginosa and S.mitis and so may also protect against other uropathogens. The sequence is that of Uromodulin (Umod) from Rattus norvegicus (Rat).